We begin with the raw amino-acid sequence, 317 residues long: tRNA dimethylallyltransferase (317 aa).

Residue 16–23 (GPTASGKS) coordinates ATP. Residue 18 to 23 (TASGKS) participates in substrate binding. 3 interaction with substrate tRNA regions span residues 41-44 (DSAQ), 165-169 (QRIQR), and 247-252 (RCVGYR).

It belongs to the IPP transferase family. As to quaternary structure, monomer. Requires Mg(2+) as cofactor.

The enzyme catalyses adenosine(37) in tRNA + dimethylallyl diphosphate = N(6)-dimethylallyladenosine(37) in tRNA + diphosphate. In terms of biological role, catalyzes the transfer of a dimethylallyl group onto the adenine at position 37 in tRNAs that read codons beginning with uridine, leading to the formation of N6-(dimethylallyl)adenosine (i(6)A). This Nitrosomonas europaea (strain ATCC 19718 / CIP 103999 / KCTC 2705 / NBRC 14298) protein is tRNA dimethylallyltransferase.